The following is a 331-amino-acid chain: Aromatic 2-oxoacid reductase (331 aa).

Residues 154–155 (RI), Asp175, 205–206 (AP), Asn211, 232–234 (AAR), and Asp258 each bind NAD(+). Arg234 is an active-site residue. Glu263 is an active-site residue. Residue His295 is the Proton donor of the active site.

Belongs to the D-isomer specific 2-hydroxyacid dehydrogenase family.

The catalysed reaction is (R)-3-phenyllactate + NAD(+) = 3-phenylpyruvate + NADH + H(+). It carries out the reaction (2R)-2-hydroxy-3-(4-hydroxyphenyl)propanoate + NAD(+) = 3-(4-hydroxyphenyl)pyruvate + NADH + H(+). The enzyme catalyses 3-(indol-3-yl)lactate + NAD(+) = indole-3-pyruvate + NADH + H(+). Its pathway is amino-acid degradation. Its function is as follows. Essential for the reductive metabolism of L-phenylalanine, L-tyrosine and L-tryptophan. Catalyzes the conversion of phenylpyruvic acid to phenyllactic acid, 4-hydroxy-phenylpyruvic acid to 4-hydroxy-phenyllactic acid, and indolepyruvic acid to indolelactic acid. In Clostridium sporogenes (strain ATCC 15579), this protein is Aromatic 2-oxoacid reductase.